A 971-amino-acid chain; its full sequence is Zinc finger CCCH domain-containing protein 7A (971 aa).

TPR repeat units lie at residues 43 to 76 (VRNL…ADYA), 89 to 122 (EKLY…NASN), and 124 to 156 (KALY…VPQD). Residue T210 is modified to Phosphothreonine. 2 consecutive C3H1-type zinc fingers follow at residues 634–656 (LCRH…HSLV) and 769–797 (PLQF…HSPE). The segment at 857-881 (FHCWMCGKNCNSEKQWQGHISSEKH) adopts a C2H2-type zinc-finger fold. The C3H1-type 3 zinc-finger motif lies at 906-928 (ICDRYMNGTCPEGNSCKFAHGNA). A coiled-coil region spans residues 924–952 (AHGNAELHEWEERRDALKMKLNKARKDHL).

It is found in the nucleus. Its function is as follows. May be a specific regulator of miRNA biogenesis. Binds to microRNAs MIR7-1, MIR16-2 and MIR29A hairpins recognizing the 3'-ATA(A/T)-5' motif in the apical loop. This is Zinc finger CCCH domain-containing protein 7A (ZC3H7A) from Homo sapiens (Human).